A 249-amino-acid polypeptide reads, in one-letter code: Demethylmenaquinone methyltransferase (249 aa).

Residues threonine 67, aspartate 87, and 115-116 (DA) contribute to the S-adenosyl-L-methionine site.

Belongs to the class I-like SAM-binding methyltransferase superfamily. MenG/UbiE family.

The catalysed reaction is a 2-demethylmenaquinol + S-adenosyl-L-methionine = a menaquinol + S-adenosyl-L-homocysteine + H(+). The protein operates within quinol/quinone metabolism; menaquinone biosynthesis; menaquinol from 1,4-dihydroxy-2-naphthoate: step 2/2. Methyltransferase required for the conversion of demethylmenaquinol (DMKH2) to menaquinol (MKH2). This is Demethylmenaquinone methyltransferase from Leptospira interrogans serogroup Icterohaemorrhagiae serovar copenhageni (strain Fiocruz L1-130).